The chain runs to 522 residues: Amine oxidase [flavin-containing] (522 aa).

The Cytoplasmic segment spans residues 1 to 492; the sequence is MTANAYDVIV…WERNLPSVGG (492 aa). Cys-398 carries the post-translational modification S-8alpha-FAD cysteine. A helical; Anchor for type IV membrane protein membrane pass occupies residues 493–513; sequence FLKFMGVSSFLAAATAAGLVA. Residues 514–522 are Mitochondrial intermembrane-facing; it reads CKKGLLPRC.

It belongs to the flavin monoamine oxidase family. As to quaternary structure, monomer, homo- or heterodimer (containing two subunits of similar size). Each subunit contains a covalently bound flavin. Enzymatically active as monomer. Requires FAD as cofactor. Strongest expression in brain and intestine, followed by liver, heart and gill. Little expression in spleen, eye or muscle. In brain, highest activity in noradrenergic and serotonergic cell groups and those of the habenulointerpeduncular pathway; moderate levels in dopaminergic cell clusters.

The protein localises to the mitochondrion outer membrane. The enzyme catalyses a secondary aliphatic amine + O2 + H2O = a primary amine + an aldehyde + H2O2. It catalyses the reaction a primary methyl amine + O2 + H2O = an aldehyde + H2O2 + NH4(+). The catalysed reaction is serotonin + O2 + H2O = (5-hydroxyindol-3-yl)acetaldehyde + H2O2 + NH4(+). It carries out the reaction 2-phenylethylamine + O2 + H2O = 2-phenylacetaldehyde + H2O2 + NH4(+). The enzyme catalyses tyramine + O2 + H2O = (4-hydroxyphenyl)acetaldehyde + H2O2 + NH4(+). It catalyses the reaction dopamine + O2 + H2O = 3,4-dihydroxyphenylacetaldehyde + H2O2 + NH4(+). The catalysed reaction is (R)-adrenaline + O2 + H2O = (R)-3,4-dihydroxymandelaldehyde + methylamine + H2O2. It carries out the reaction (R)-noradrenaline + O2 + H2O = (R)-3,4-dihydroxymandelaldehyde + H2O2 + NH4(+). The enzyme catalyses kynuramine + O2 + H2O = 3-(2-aminophenyl)-3-oxopropanal + H2O2 + NH4(+). It catalyses the reaction tryptamine + O2 + H2O = indole-3-acetaldehyde + H2O2 + NH4(+). Its activity is regulated as follows. Inhibited by both clorgyline (selective MAOA inhibitor) and deprenyl (selective MAOB inhibitor). Functionally, catalyzes the oxidative deamination of biogenic and xenobiotic amines and has important functions in the metabolism of neuroactive and vasoactive amines in the central nervous system and peripheral tissues. Preferentially oxidizes serotonin and tyramine. Also catalyzes the oxidative deamination of kynuramine to 3-(2-aminophenyl)-3-oxopropanal that can spontaneously condense to 4-hydroxyquinoline. The protein is Amine oxidase [flavin-containing] of Danio rerio (Zebrafish).